The sequence spans 81 residues: Photosystem I iron-sulfur center (81 aa).

2 4Fe-4S ferredoxin-type domains span residues Ala-2–Trp-31 and Ile-39–Tyr-68. [4Fe-4S] cluster-binding residues include Cys-11, Cys-14, Cys-17, Cys-21, Cys-48, Cys-51, Cys-54, and Cys-58.

As to quaternary structure, the eukaryotic PSI reaction center is composed of at least 11 subunits. The cofactor is [4Fe-4S] cluster.

The protein resides in the plastid. The protein localises to the chloroplast thylakoid membrane. The enzyme catalyses reduced [plastocyanin] + hnu + oxidized [2Fe-2S]-[ferredoxin] = oxidized [plastocyanin] + reduced [2Fe-2S]-[ferredoxin]. In terms of biological role, apoprotein for the two 4Fe-4S centers FA and FB of photosystem I (PSI); essential for photochemical activity. FB is the terminal electron acceptor of PSI, donating electrons to ferredoxin. The C-terminus interacts with PsaA/B/D and helps assemble the protein into the PSI complex. Required for binding of PsaD and PsaE to PSI. PSI is a plastocyanin/cytochrome c6-ferredoxin oxidoreductase, converting photonic excitation into a charge separation, which transfers an electron from the donor P700 chlorophyll pair to the spectroscopically characterized acceptors A0, A1, FX, FA and FB in turn. This Gracilaria tenuistipitata var. liui (Red alga) protein is Photosystem I iron-sulfur center.